We begin with the raw amino-acid sequence, 771 residues long: Probable dipeptidyl peptidase 4 (771 aa).

The signal sequence occupies residues 1 to 16; sequence MKYSKLLLLLVSVVQA. N-linked (GlcNAc...) asparagine glycans are attached at residues Asn37, Asn80, Asn114, Asn173, Asn222, Asn470, and Asn495. Residues Ser618, Asp695, and His730 each act as charge relay system in the active site.

The protein belongs to the peptidase S9B family.

It localises to the secreted. The catalysed reaction is Release of an N-terminal dipeptide, Xaa-Yaa-|-Zaa-, from a polypeptide, preferentially when Yaa is Pro, provided Zaa is neither Pro nor hydroxyproline.. Functionally, extracellular dipeptidyl-peptidase which removes N-terminal dipeptides sequentially from polypeptides having unsubstituted N-termini provided that the penultimate residue is proline. The protein is Probable dipeptidyl peptidase 4 (dpp4) of Aspergillus flavus (strain ATCC 200026 / FGSC A1120 / IAM 13836 / NRRL 3357 / JCM 12722 / SRRC 167).